The sequence spans 244 residues: Protein-L-isoaspartate O-methyltransferase 2 (244 aa).

S88 is an active-site residue.

Belongs to the methyltransferase superfamily. L-isoaspartyl/D-aspartyl protein methyltransferase family.

It localises to the cytoplasm. The catalysed reaction is [protein]-L-isoaspartate + S-adenosyl-L-methionine = [protein]-L-isoaspartate alpha-methyl ester + S-adenosyl-L-homocysteine. In terms of biological role, catalyzes the methyl esterification of L-isoaspartyl residues in peptides and proteins that result from spontaneous decomposition of normal L-aspartyl and L-asparaginyl residues. It plays a role in the repair and/or degradation of damaged proteins. This chain is Protein-L-isoaspartate O-methyltransferase 2, found in Shewanella sediminis (strain HAW-EB3).